Reading from the N-terminus, the 262-residue chain is Aconitate isomerase (262 aa).

An N-terminal signal peptide occupies residues 1-22; that stretch reads MFPRLPTLALGALLLASTPLLA.

Monomer.

It carries out the reaction trans-aconitate = cis-aconitate. Activated more than 1.5 fold by Ca(2+), Mg(2+), Mn(2+), Ni(2+), Fe(2+), DDT and 1,10-phenanthroline. Strongly inhibited by Ag(+) and Hg(+). Inhibited by addition of 20% (v/v) glycerol. No effect by addition of NADH or NADPH. Functionally, involved in assimilation of trans-aconitic acid. Preference for cis-aconitic acid is 14-fold higher than for trans-aconitic acid. Not active on intermediates of tricarboxylic acid (TCA) cycle including citric acid, succinic acid, fumaric acid, and 2-oxoglutaric acid or on other dicarboxilic acids including itaconic acid, formic acid, citraconic acid or maleic acid. This is Aconitate isomerase from Pseudomonas sp.